Consider the following 32-residue polypeptide: NRNNRDWWHFADYGCYCGYGGSGTPVDELDRC.

Ca(2+) is bound by residues Y16, G18, and G20.

Ca(2+) is required as a cofactor. In terms of tissue distribution, expressed by the venom gland.

It is found in the secreted. The catalysed reaction is a 1,2-diacyl-sn-glycero-3-phosphocholine + H2O = a 1-acyl-sn-glycero-3-phosphocholine + a fatty acid + H(+). PLA2 catalyzes the calcium-dependent hydrolysis of the 2-acyl groups in 3-sn-phosphoglycerides. The chain is Phospholipase A2 from Micrurus lemniscatus (South American coral snake).